Consider the following 425-residue polypeptide: Serine--tRNA ligase (425 aa).

Residue 228-230 (TAE) participates in L-serine binding. Residue 259-261 (RSE) coordinates ATP. Glu282 contacts L-serine. 346–349 (EIAS) provides a ligand contact to ATP. Ser382 provides a ligand contact to L-serine.

It belongs to the class-II aminoacyl-tRNA synthetase family. Type-1 seryl-tRNA synthetase subfamily. Homodimer. The tRNA molecule binds across the dimer.

Its subcellular location is the cytoplasm. It carries out the reaction tRNA(Ser) + L-serine + ATP = L-seryl-tRNA(Ser) + AMP + diphosphate + H(+). It catalyses the reaction tRNA(Sec) + L-serine + ATP = L-seryl-tRNA(Sec) + AMP + diphosphate + H(+). The protein operates within aminoacyl-tRNA biosynthesis; selenocysteinyl-tRNA(Sec) biosynthesis; L-seryl-tRNA(Sec) from L-serine and tRNA(Sec): step 1/1. Catalyzes the attachment of serine to tRNA(Ser). Is also able to aminoacylate tRNA(Sec) with serine, to form the misacylated tRNA L-seryl-tRNA(Sec), which will be further converted into selenocysteinyl-tRNA(Sec). This chain is Serine--tRNA ligase, found in Rickettsia africae (strain ESF-5).